The chain runs to 134 residues: MKRKYRRLFVVIITLSIFAGSVVLVLGKLKNNVSFFYTPTELLSSSLINRPNIRIGGMVVKGTVQKYDDSIVFHITDLKNYIKVVYKGILPPLFSEGSWIVAKGKMVNGKFIASEILAKHDENYMPNKYKTNDL.

Over 1 to 7 the chain is Cytoplasmic; it reads MKRKYRR. Residues 8–28 traverse the membrane as a helical; Signal-anchor for type II membrane protein segment; sequence LFVVIITLSIFAGSVVLVLGK. Residues 29 to 134 lie on the Periplasmic side of the membrane; it reads LKNNVSFFYT…MPNKYKTNDL (106 aa). 2 residues coordinate heme: His-120 and Tyr-124.

The protein belongs to the CcmE/CycJ family.

Its subcellular location is the cell inner membrane. Functionally, heme chaperone required for the biogenesis of c-type cytochromes. Transiently binds heme delivered by CcmC and transfers the heme to apo-cytochromes in a process facilitated by CcmF and CcmH. The chain is Cytochrome c-type biogenesis protein CcmE from Ehrlichia ruminantium (strain Welgevonden).